The primary structure comprises 286 residues: Shikimate dehydrogenase (NADP(+)) (286 aa).

Residues 20-22 (SLS) and threonine 65 contribute to the shikimate site. The active-site Proton acceptor is the lysine 69. NADP(+) is bound at residue aspartate 81. Shikimate contacts are provided by asparagine 90 and aspartate 105. NADP(+) contacts are provided by residues 128 to 132 (GAGGA) and threonine 217. Residue tyrosine 219 coordinates shikimate. Residue glycine 240 coordinates NADP(+).

This sequence belongs to the shikimate dehydrogenase family. Homodimer.

It catalyses the reaction shikimate + NADP(+) = 3-dehydroshikimate + NADPH + H(+). Its pathway is metabolic intermediate biosynthesis; chorismate biosynthesis; chorismate from D-erythrose 4-phosphate and phosphoenolpyruvate: step 4/7. Functionally, involved in the biosynthesis of the chorismate, which leads to the biosynthesis of aromatic amino acids. Catalyzes the reversible NADPH linked reduction of 3-dehydroshikimate (DHSA) to yield shikimate (SA). In Syntrophobacter fumaroxidans (strain DSM 10017 / MPOB), this protein is Shikimate dehydrogenase (NADP(+)).